A 182-amino-acid chain; its full sequence is MGLRPAKIDRDVDKPAYTRREYIRGAPGPKITIFDMGNLSAEFQYEVSLHAEQAMQIRQNALEAIRIQVNRYLQKNVGRSNYHFKIRVYPFQVLRENPMATGRKADRYGNGMRRPFGKPIGLAARVKKDQKILTVWVNEGHLKFALEAMRRAAMKLPYSAYYRIYDKEGNDITSKVLSTMKR.

The protein belongs to the universal ribosomal protein uL16 family.

The sequence is that of Large ribosomal subunit protein uL16 from Thermococcus onnurineus (strain NA1).